The sequence spans 200 residues: Large ribosomal subunit protein uL4 (200 aa).

The tract at residues 38-73 (GRQGTKGQKSRSDVSGGGKRPWRQKGTGRARAGTTR) is disordered.

Belongs to the universal ribosomal protein uL4 family. Part of the 50S ribosomal subunit.

One of the primary rRNA binding proteins, this protein initially binds near the 5'-end of the 23S rRNA. It is important during the early stages of 50S assembly. It makes multiple contacts with different domains of the 23S rRNA in the assembled 50S subunit and ribosome. Its function is as follows. Forms part of the polypeptide exit tunnel. This is Large ribosomal subunit protein uL4 from Ectopseudomonas mendocina (strain ymp) (Pseudomonas mendocina).